The primary structure comprises 546 residues: Phosphomethylpyrimidine synthase (546 aa).

Substrate-binding positions include N145, M174, Y203, H239, 259–261, 300–303, and E339; these read SRG and DGLR. Position 343 (H343) interacts with Zn(2+). Y366 is a binding site for substrate. H407 contributes to the Zn(2+) binding site. [4Fe-4S] cluster is bound by residues C487, C490, and C495.

This sequence belongs to the ThiC family. The cofactor is [4Fe-4S] cluster.

It catalyses the reaction 5-amino-1-(5-phospho-beta-D-ribosyl)imidazole + S-adenosyl-L-methionine = 4-amino-2-methyl-5-(phosphooxymethyl)pyrimidine + CO + 5'-deoxyadenosine + formate + L-methionine + 3 H(+). It participates in cofactor biosynthesis; thiamine diphosphate biosynthesis. Functionally, catalyzes the synthesis of the hydroxymethylpyrimidine phosphate (HMP-P) moiety of thiamine from aminoimidazole ribotide (AIR) in a radical S-adenosyl-L-methionine (SAM)-dependent reaction. The protein is Phosphomethylpyrimidine synthase of Mycobacterium ulcerans (strain Agy99).